A 166-amino-acid chain; its full sequence is Transcriptional repressor NrdR (166 aa).

A zinc finger spans residues C3–C34. The region spanning L49 to S139 is the ATP-cone domain.

The protein belongs to the NrdR family. The cofactor is Zn(2+).

Its function is as follows. Negatively regulates transcription of bacterial ribonucleotide reductase nrd genes and operons by binding to NrdR-boxes. The sequence is that of Transcriptional repressor NrdR from Pelotomaculum thermopropionicum (strain DSM 13744 / JCM 10971 / SI).